The primary structure comprises 125 residues: uncharacterized protein (125 aa).

The helical transmembrane segment at Asn-7 to Met-29 threads the bilayer.

It localises to the membrane. This is an uncharacterized protein from Saccharomyces cerevisiae (strain ATCC 204508 / S288c) (Baker's yeast).